A 209-amino-acid polypeptide reads, in one-letter code: Large ribosomal subunit protein uL3 (209 aa).

The segment at 118–150 (GFQGAIKRHGQSRGPMTHGSRYHRRPGSMGPVD) is disordered.

It belongs to the universal ribosomal protein uL3 family. Part of the 50S ribosomal subunit. Forms a cluster with proteins L14 and L19.

Functionally, one of the primary rRNA binding proteins, it binds directly near the 3'-end of the 23S rRNA, where it nucleates assembly of the 50S subunit. The chain is Large ribosomal subunit protein uL3 from Bacillus pumilus (strain SAFR-032).